The sequence spans 105 residues: uncharacterized protein (105 aa).

The protein to C.jejuni CJ1463.

This is an uncharacterized protein from Helicobacter pylori (strain ATCC 700392 / 26695) (Campylobacter pylori).